Consider the following 185-residue polypeptide: Riboflavin kinase (185 aa).

Residues T41 and N43 each contribute to the Mg(2+) site. E122 serves as the catalytic Nucleophile.

It belongs to the flavokinase family. Requires Zn(2+) as cofactor. It depends on Mg(2+) as a cofactor.

The catalysed reaction is riboflavin + ATP = FMN + ADP + H(+). It functions in the pathway cofactor biosynthesis; FMN biosynthesis; FMN from riboflavin (ATP route): step 1/1. Catalyzes the phosphorylation of riboflavin (vitamin B2) to form flavin mononucleotide (FMN) coenzyme. This chain is Riboflavin kinase (FMN1), found in Kluyveromyces lactis (strain ATCC 8585 / CBS 2359 / DSM 70799 / NBRC 1267 / NRRL Y-1140 / WM37) (Yeast).